Consider the following 248-residue polypeptide: MKLFVGLGNPGAKYAGNRHNIGFMALDQIASDHGFSPWKSKFQAQMSEGTLSGEKVILLKPQTFMNNSGQSVGEALRFFKLTPADVVVFHDELDLAPSKCRVKNGGGHAGHNGLRSIHAHIGADYGRVRLGVGHPGHKDAVAGYVLRDFPKADQGWLDDLMRGLSDGAAALATGDSGRFMNAVALRVAPPRSSTGEASKGRKKAQKSEPGVAKTPAKAATPEAPAAGDIPAAPEDSRSPMQKLLDKFK.

A tRNA-binding site is contributed by Tyr14. Catalysis depends on His19, which acts as the Proton acceptor. TRNA is bound by residues Phe64, Asn66, and Asn112. Residues 190 to 248 are disordered; it reads PRSSTGEASKGRKKAQKSEPGVAKTPAKAATPEAPAAGDIPAAPEDSRSPMQKLLDKFK. Low complexity predominate over residues 212-226; the sequence is AKTPAKAATPEAPAA.

The protein belongs to the PTH family. In terms of assembly, monomer.

It localises to the cytoplasm. The catalysed reaction is an N-acyl-L-alpha-aminoacyl-tRNA + H2O = an N-acyl-L-amino acid + a tRNA + H(+). Hydrolyzes ribosome-free peptidyl-tRNAs (with 1 or more amino acids incorporated), which drop off the ribosome during protein synthesis, or as a result of ribosome stalling. Its function is as follows. Catalyzes the release of premature peptidyl moieties from peptidyl-tRNA molecules trapped in stalled 50S ribosomal subunits, and thus maintains levels of free tRNAs and 50S ribosomes. The sequence is that of Peptidyl-tRNA hydrolase from Ruegeria sp. (strain TM1040) (Silicibacter sp.).